Reading from the N-terminus, the 108-residue chain is UPF0102 protein Sbal_4100 (108 aa).

This sequence belongs to the UPF0102 family.

This is UPF0102 protein Sbal_4100 from Shewanella baltica (strain OS155 / ATCC BAA-1091).